A 487-amino-acid polypeptide reads, in one-letter code: Serine/threonine-protein kinase 4 (487 aa).

Methionine 1 is modified (N-acetylmethionine). At threonine 3 the chain carries Phosphothreonine. The 252-residue stretch at 30-281 folds into the Protein kinase domain; it reads FDVLEKLGEG…ATQLLQHPFV (252 aa). ATP is bound by residues 36-44 and lysine 59; that span reads LGEGSYGSV. The active-site Proton acceptor is aspartate 149. Threonine 183 carries the phosphothreonine; by autocatalysis modification. Serine 265 carries the post-translational modification Phosphoserine. A coiled-coil region spans residues 290 to 310; it reads LRDLINEAMDVKLKRQESQQR. The span at 303-312 shows a compositional bias: basic and acidic residues; the sequence is KRQESQQREV. A disordered region spans residues 303–332; that stretch reads KRQESQQREVDQDDEENSEEDEMDSGTMVR. Residues 313 to 326 are compositionally biased toward acidic residues; that stretch reads DQDDEENSEEDEMD. Serine 320 carries the phosphoserine modification. 2 positions are modified to phosphothreonine: threonine 340 and threonine 367. Threonine 387 bears the Phosphothreonine; by PKB/AKT1 mark. Phosphoserine occurs at positions 410 and 414. Tyrosine 433 is modified (phosphotyrosine). The SARAH domain occupies 433–480; sequence YEFLKSWTVEDLQKRLLALDPMMEQEIEEIRQKYQSKRQPILDAIEAK.

Belongs to the protein kinase superfamily. STE Ser/Thr protein kinase family. STE20 subfamily. Homodimer; mediated via the coiled-coil region. Interacts with NORE1, which inhibits autoactivation. Interacts with and stabilizes SAV1. Interacts with RASSF1. Interacts with FOXO3. Interacts with RASSF2 (via SARAH domain). Interacts with AR, PKB/AKT1, TNNI3 and SIRT1. Interacts with DLG5 (via PDZ domain 3). Interacts with MARK3 and SCRIB in the presence of DLG5. Mg(2+) serves as cofactor. Autophosphorylated on serine and threonine residues. Phosphorylation at Thr-387 by PKB/AKT1, leads to inhibition of its: kinase activity, nuclear translocation and autophosphorylation at Thr-183. It also diminishes its cleavage by caspases and its ability to phosphorylate FOXO3. In terms of processing, proteolytically cleaved by caspase-3 during apoptosis at Asp-326 and Asp-349 resulting in a 37 kDa or a 39 kDa subunit respectively. The 39 kDa subunit is further cleaved into the 37 kDa form. Proteolytic cleavage results in kinase activation and nuclear translocation of the truncated form (MST1/N). It is less likely that cleavage at Asp-349 is a prerequisite for activation as this site is not conserved in the murine ortholog.

The protein resides in the cytoplasm. The protein localises to the nucleus. The enzyme catalyses L-seryl-[protein] + ATP = O-phospho-L-seryl-[protein] + ADP + H(+). It carries out the reaction L-threonyl-[protein] + ATP = O-phospho-L-threonyl-[protein] + ADP + H(+). Inhibited by the C-terminal non-catalytic region. Activated by caspase-cleavage. Full activation also requires homodimerization and autophosphorylation of Thr-183. Activated by RASSF1 which acts by preventing its dephosphorylation. In terms of biological role, stress-activated, pro-apoptotic kinase which, following caspase-cleavage, enters the nucleus and induces chromatin condensation followed by internucleosomal DNA fragmentation. Key component of the Hippo signaling pathway which plays a pivotal role in organ size control and tumor suppression by restricting proliferation and promoting apoptosis. The core of this pathway is composed of a kinase cascade wherein STK3/MST2 and STK4/MST1, in complex with its regulatory protein SAV1, phosphorylates and activates LATS1/2 in complex with its regulatory protein MOB1, which in turn phosphorylates and inactivates YAP1 oncoprotein and WWTR1/TAZ. Phosphorylation of YAP1 by LATS2 inhibits its translocation into the nucleus to regulate cellular genes important for cell proliferation, cell death, and cell migration. STK3/MST2 and STK4/MST1 are required to repress proliferation of mature hepatocytes, to prevent activation of facultative adult liver stem cells (oval cells), and to inhibit tumor formation. Phosphorylates 'Ser-14' of histone H2B (H2BS14ph) during apoptosis. Phosphorylates FOXO3 upon oxidative stress, which results in its nuclear translocation and cell death initiation. Phosphorylates MOBKL1A, MOBKL1B and RASSF2. Phosphorylates TNNI3 (cardiac Tn-I) and alters its binding affinity to TNNC1 (cardiac Tn-C) and TNNT2 (cardiac Tn-T). Phosphorylates FOXO1 on 'Ser-212' and regulates its activation and stimulates transcription of PMAIP1 in a FOXO1-dependent manner. Phosphorylates SIRT1 and inhibits SIRT1-mediated p53/TP53 deacetylation, thereby promoting p53/TP53 dependent transcription and apoptosis upon DNA damage. Acts as an inhibitor of PKB/AKT1. Phosphorylates AR on 'Ser-650' and suppresses its activity by intersecting with PKB/AKT1 signaling and antagonizing formation of AR-chromatin complexes. This Macaca mulatta (Rhesus macaque) protein is Serine/threonine-protein kinase 4 (STK4).